The following is a 158-amino-acid chain: Small ribosomal subunit protein uS7 (158 aa).

It belongs to the universal ribosomal protein uS7 family. Part of the 30S ribosomal subunit. Contacts proteins S9 and S11.

Functionally, one of the primary rRNA binding proteins, it binds directly to 16S rRNA where it nucleates assembly of the head domain of the 30S subunit. Is located at the subunit interface close to the decoding center, probably blocks exit of the E-site tRNA. In Leptospira biflexa, this protein is Small ribosomal subunit protein uS7.